A 685-amino-acid polypeptide reads, in one-letter code: Nucleolar protein 4 (685 aa).

Positions 1 to 21 (MEETIENVEVPSSNVSKQNDD) are disordered. An RRM 1 domain is found at 26-103 (KTLFVRSIPQ…HILRVDIAKR (78 aa)). A compositionally biased stretch (basic and acidic residues) spans 106-123 (RSKKTSEVVEKSTPESSE). Positions 106 to 142 (RSKKTSEVVEKSTPESSEKITGQNNEDEDDADGEDSM) are disordered. Acidic residues predominate over residues 130 to 140 (NEDEDDADGED). The RRM 2 domain occupies 147–225 (PKLIIRNMPW…RKVAVDFAVQ (79 aa)). The span at 231–242 (DYKKAQPEMNDK) shows a compositional bias: basic and acidic residues. The tract at residues 231 to 285 (DYKKAQPEMNDKDDNESGNEDAEENHDDEEDENEEEDRQVDQASKNKESKRKAQN) is disordered. A compositionally biased stretch (acidic residues) spans 243 to 268 (DDNESGNEDAEENHDDEEDENEEEDR). The residue at position 247 (Ser247) is a Phosphoserine. 2 RRM domains span residues 290–383 (FSVF…PTLV) and 462–612 (TRLA…FAIE). At Thr379 the chain carries Phosphothreonine. A compositionally biased stretch (basic residues) spans 622–631 (EQLKQARTKR). Residues 622-685 (EQLKQARTKR…FKRKRKHAKK (64 aa)) form a disordered region. Positions 645–672 (SENKKPKKEEATTPTNPDDKKMGDDIKR) are enriched in basic and acidic residues. Residues 674 to 685 (IGFKRKRKHAKK) show a composition bias toward basic residues.

As to quaternary structure, interacts with NOP1.

It localises to the nucleus. Its subcellular location is the nucleolus. Required for 60S ribosomal subunit synthesis. Probably involved in the processing of 27S rRNA to produce mature 25S rRNA. The chain is Nucleolar protein 4 (NOP4) from Saccharomyces cerevisiae (strain ATCC 204508 / S288c) (Baker's yeast).